Consider the following 707-residue polypeptide: MAP kinase-interacting serine/threonine-protein kinase mnk-1 (707 aa).

Residues 1–24 (MFFLDNTDSMTSSSRGITMPNTIS) are compositionally biased toward polar residues. Disordered regions lie at residues 1–29 (MFFLDNTDSMTSSSRGITMPNTISSHEDV) and 101–131 (RQRERETYEDEDVLSSSDESSGRPIPRYVGR). A Protein kinase domain is found at 203–493 (KLTDEHLGSG…ADQILSHRWL (291 aa)). Residues 209–217 (LGSGAYGSV) and Lys-232 contribute to the ATP site. The Proton acceptor role is filled by Asp-325. Disordered regions lie at residues 589-628 (RSGEFTPPISRASPTTPPPSMLNLSEDLTDSPVKRRSADD) and 688-707 (FEDEQENANPIHRIETQVNV).

This sequence belongs to the protein kinase superfamily. CAMK Ser/Thr protein kinase family. It depends on Mg(2+) as a cofactor. As to expression, expressed in pharynx, intestine, vulva and body wall muscles.

Its subcellular location is the nucleus. It localises to the cytoplasm. It carries out the reaction L-seryl-[protein] + ATP = O-phospho-L-seryl-[protein] + ADP + H(+). The catalysed reaction is L-threonyl-[protein] + ATP = O-phospho-L-threonyl-[protein] + ADP + H(+). Serine/threonine-protein kinase which is required in the germline to positively regulate lifespan. May play a role in body wall muscle contraction. May be involved in embryonic cytokinesis. The polypeptide is MAP kinase-interacting serine/threonine-protein kinase mnk-1 (Caenorhabditis elegans).